Reading from the N-terminus, the 377-residue chain is Glutamate 5-kinase (377 aa).

Lysine 20 contacts ATP. 3 residues coordinate substrate: serine 60, aspartate 147, and asparagine 159. Serine 179–aspartate 180 is a binding site for ATP. A PUA domain is found at histidine 281 to phenylalanine 355.

The protein belongs to the glutamate 5-kinase family.

Its subcellular location is the cytoplasm. The enzyme catalyses L-glutamate + ATP = L-glutamyl 5-phosphate + ADP. It functions in the pathway amino-acid biosynthesis; L-proline biosynthesis; L-glutamate 5-semialdehyde from L-glutamate: step 1/2. In terms of biological role, catalyzes the transfer of a phosphate group to glutamate to form L-glutamate 5-phosphate. In Corynebacterium jeikeium (strain K411), this protein is Glutamate 5-kinase.